A 159-amino-acid chain; its full sequence is 2-C-methyl-D-erythritol 2,4-cyclodiphosphate synthase (159 aa).

The a divalent metal cation site is built by Asp10 and His12. 4-CDP-2-C-methyl-D-erythritol 2-phosphate contacts are provided by residues 10–12 and 37–38; these read DVH and HS. Position 45 (His45) interacts with a divalent metal cation. 4-CDP-2-C-methyl-D-erythritol 2-phosphate contacts are provided by residues 59-61, 64-68, 103-109, 135-138, Phe142, and Arg145; these read DIG, FPDTD, AQAPKML, and TTTE.

This sequence belongs to the IspF family. As to quaternary structure, homotrimer. The cofactor is a divalent metal cation.

The enzyme catalyses 4-CDP-2-C-methyl-D-erythritol 2-phosphate = 2-C-methyl-D-erythritol 2,4-cyclic diphosphate + CMP. It functions in the pathway isoprenoid biosynthesis; isopentenyl diphosphate biosynthesis via DXP pathway; isopentenyl diphosphate from 1-deoxy-D-xylulose 5-phosphate: step 4/6. Functionally, involved in the biosynthesis of isopentenyl diphosphate (IPP) and dimethylallyl diphosphate (DMAPP), two major building blocks of isoprenoid compounds. Catalyzes the conversion of 4-diphosphocytidyl-2-C-methyl-D-erythritol 2-phosphate (CDP-ME2P) to 2-C-methyl-D-erythritol 2,4-cyclodiphosphate (ME-CPP) with a corresponding release of cytidine 5-monophosphate (CMP). This is 2-C-methyl-D-erythritol 2,4-cyclodiphosphate synthase from Francisella philomiragia subsp. philomiragia (strain ATCC 25017 / CCUG 19701 / FSC 153 / O#319-036).